An 882-amino-acid polypeptide reads, in one-letter code: Alanine--tRNA ligase (882 aa).

Positions 570, 574, 672, and 676 each coordinate Zn(2+).

This sequence belongs to the class-II aminoacyl-tRNA synthetase family. Requires Zn(2+) as cofactor.

It localises to the cytoplasm. It carries out the reaction tRNA(Ala) + L-alanine + ATP = L-alanyl-tRNA(Ala) + AMP + diphosphate. Catalyzes the attachment of alanine to tRNA(Ala) in a two-step reaction: alanine is first activated by ATP to form Ala-AMP and then transferred to the acceptor end of tRNA(Ala). Also edits incorrectly charged Ser-tRNA(Ala) and Gly-tRNA(Ala) via its editing domain. The polypeptide is Alanine--tRNA ligase (Xanthomonas euvesicatoria pv. vesicatoria (strain 85-10) (Xanthomonas campestris pv. vesicatoria)).